We begin with the raw amino-acid sequence, 366 residues long: Spermine synthase (366 aa).

Residue Ala2 is modified to N-acetylalanine. Residue Ser57 is modified to Phosphoserine. A PABS domain is found at 122–362 (RYWPTADGRL…ELWVFYTVWK (241 aa)). Position 148 (Gln148) interacts with S-adenosyl 3-(methylsulfanyl)propylamine. The spermidine site is built by Tyr177 and Asp201. S-adenosyl 3-(methylsulfanyl)propylamine contacts are provided by residues Glu220 and 255–256 (DC). The Proton acceptor role is filled by Asp276. Residues Tyr351 and Glu353 each contribute to the spermidine site.

This sequence belongs to the spermidine/spermine synthase family. As to quaternary structure, homodimer. Dimerization is mediated through the N-terminal domain and seems to be required for activity as deletion of the N-terminal domain causes complete loss of activity.

The catalysed reaction is S-adenosyl 3-(methylsulfanyl)propylamine + spermidine = spermine + S-methyl-5'-thioadenosine + H(+). It functions in the pathway amine and polyamine biosynthesis; spermine biosynthesis; spermine from spermidine: step 1/1. Its function is as follows. Catalyzes the production of spermine from spermidine and decarboxylated S-adenosylmethionine (dcSAM). Required for normal viability, growth and fertility. The sequence is that of Spermine synthase (Sms) from Mus musculus (Mouse).